A 657-amino-acid chain; its full sequence is Glycogen debranching enzyme (657 aa).

Aspartate 334 (nucleophile) is an active-site residue. Glutamate 369 acts as the Proton donor in catalysis. The disordered stretch occupies residues 458-485; the sequence is ANGEQNRDGTNSNFSFNHGTEGLEADET. Over residues 465 to 475 the composition is skewed to polar residues; sequence DGTNSNFSFNH.

Belongs to the glycosyl hydrolase 13 family.

It localises to the cytoplasm. It carries out the reaction Hydrolysis of (1-&gt;6)-alpha-D-glucosidic linkages to branches with degrees of polymerization of three or four glucose residues in limit dextrin.. It functions in the pathway glycan degradation; glycogen degradation. Slightly activated by Ca(2+). Inhibited by divalent cations such as Zn(2+), Cu(2+), Fe(2+), Mg(2+), Mn(2+), but only slightly inhibited by EDTA. Functionally, removes maltotriose and maltotetraose chains that are attached by 1,6-alpha-linkage to the limit dextrin main chain, generating a debranched limit dextrin. Hydrolyzes the alpha-1,6-glycosidic linkages in amylopectin while does not hydrolyze the alpha-1,4-glycosidic linkages in amylose. Native glycogen is a poor substrate. The protein is Glycogen debranching enzyme of Dickeya chrysanthemi (Pectobacterium chrysanthemi).